The sequence spans 147 residues: Myosin-ID light chain (147 aa).

3 EF-hand domains span residues E8 to N43, F79 to R114, and L115 to K147. Ca(2+) is bound by residues D21, N23, D25, K27, and E32.

In terms of assembly, myosin I is a dimer of a heavy and a light chain. Inability to self-assemble into filaments. Interacts with myoD. Does not interact with myoB or myoC.

It localises to the cytoplasm. Functionally, functions as the light chain for myosin-D. Has low affinity for calcium. The sequence is that of Myosin-ID light chain (mlcD) from Dictyostelium discoideum (Social amoeba).